The chain runs to 203 residues: Small ribosomal subunit protein uS4 (203 aa).

In terms of domain architecture, S4 RNA-binding spans 93–173 (RRFDNVVFRS…IPSWIQVDKA (81 aa)).

It belongs to the universal ribosomal protein uS4 family. In terms of assembly, part of the 30S ribosomal subunit. Contacts protein S5. The interaction surface between S4 and S5 is involved in control of translational fidelity.

Its function is as follows. One of the primary rRNA binding proteins, it binds directly to 16S rRNA where it nucleates assembly of the body of the 30S subunit. In terms of biological role, with S5 and S12 plays an important role in translational accuracy. This is Small ribosomal subunit protein uS4 from Chlorobium phaeobacteroides (strain DSM 266 / SMG 266 / 2430).